A 1094-amino-acid polypeptide reads, in one-letter code: Probable arabinosyltransferase C (1094 aa).

A run of 13 helical transmembrane segments spans residues 28 to 50 (IARY…TPLL), 232 to 251 (AAMI…LHIL), 264 to 286 (PARW…WWHF), 341 to 360 (SIWM…WVIS), 373 to 392 (TSRA…WLPL), 431 to 453 (IGAL…LVAI), 466 to 488 (RFGV…IPIF), 530 to 552 (SIAR…AMSL), 565 to 582 (SRRI…MMFT), 586 to 608 (WTHH…AVAV), 620 to 642 (TVFA…GWWY), 657 to 679 (WRWS…AAWF), and 700 to 722 (LAGI…EVVS). Low complexity predominate over residues 817–831 (GSEPGTEGGTTAAPG). Residues 817-836 (GSEPGTEGGTTAAPGINGSR) form a disordered region.

The protein belongs to the emb family.

Its subcellular location is the cell membrane. Arabinosyl transferase responsible for the polymerization of arabinose into the arabinan of arabinogalactan. This Mycobacterium tuberculosis (strain ATCC 25618 / H37Rv) protein is Probable arabinosyltransferase C (embC).